The chain runs to 454 residues: MSGRFAVILAAGQGTRMKSKLYKVLHPVCGKPMVEHVVDQVSKLEFDKTAVIVGHGAEEVKKTLTEKIEFVMQPEQLGTGHAVKCAEHLLASQKGTTVVLCGDTPLITAATIKKLMDTHEANGAKATVLTAHAPDPTGYGRVIRGNQGQVEKIVEHKDASVDELAIAEVNTGTYCFDNEALFEALAEVKNENAQGEYYLPDVIGILRQKGETISAYQTDSLSETMGVNDRVALSQAEAAMRKRINEEWMRQGVTIIDPQTTYISADASIGQDTVLYPNTSIKGPSVIGEDCVIESGTEIASATLGRGVHVCSSVISNSVVADGSSIGPFAHIRPGSDVGENVRVGNFVELKKASIGTGSKVSHLTYVGDAEVGSDVNVGCGVVTVNYDGKNKHKTIIKDGAFVGSGSNLIAPVEIGERAFVAAGSTITDDVPSQALSIARSRQVNKDNYVKKDV.

A pyrophosphorylase region spans residues 1-230; that stretch reads MSGRFAVILA…LSETMGVNDR (230 aa). UDP-N-acetyl-alpha-D-glucosamine-binding positions include 9–12, lysine 23, glutamine 73, and 78–79; these read LAAG and GT. Position 103 (aspartate 103) interacts with Mg(2+). UDP-N-acetyl-alpha-D-glucosamine-binding residues include glycine 140, glutamate 155, asparagine 170, and asparagine 228. A Mg(2+)-binding site is contributed by asparagine 228. The segment at 231 to 251 is linker; sequence VALSQAEAAMRKRINEEWMRQ. An N-acetyltransferase region spans residues 252 to 454; that stretch reads GVTIIDPQTT…NKDNYVKKDV (203 aa). Residues arginine 333 and lysine 351 each coordinate UDP-N-acetyl-alpha-D-glucosamine. The active-site Proton acceptor is the histidine 363. UDP-N-acetyl-alpha-D-glucosamine-binding residues include tyrosine 366 and asparagine 377. Acetyl-CoA is bound by residues 386-387, serine 405, alanine 423, and arginine 440; that span reads NY.

In the N-terminal section; belongs to the N-acetylglucosamine-1-phosphate uridyltransferase family. This sequence in the C-terminal section; belongs to the transferase hexapeptide repeat family. In terms of assembly, homotrimer. The cofactor is Mg(2+).

It is found in the cytoplasm. It carries out the reaction alpha-D-glucosamine 1-phosphate + acetyl-CoA = N-acetyl-alpha-D-glucosamine 1-phosphate + CoA + H(+). The enzyme catalyses N-acetyl-alpha-D-glucosamine 1-phosphate + UTP + H(+) = UDP-N-acetyl-alpha-D-glucosamine + diphosphate. Its pathway is nucleotide-sugar biosynthesis; UDP-N-acetyl-alpha-D-glucosamine biosynthesis; N-acetyl-alpha-D-glucosamine 1-phosphate from alpha-D-glucosamine 6-phosphate (route II): step 2/2. It functions in the pathway nucleotide-sugar biosynthesis; UDP-N-acetyl-alpha-D-glucosamine biosynthesis; UDP-N-acetyl-alpha-D-glucosamine from N-acetyl-alpha-D-glucosamine 1-phosphate: step 1/1. The protein operates within bacterial outer membrane biogenesis; LPS lipid A biosynthesis. Catalyzes the last two sequential reactions in the de novo biosynthetic pathway for UDP-N-acetylglucosamine (UDP-GlcNAc). The C-terminal domain catalyzes the transfer of acetyl group from acetyl coenzyme A to glucosamine-1-phosphate (GlcN-1-P) to produce N-acetylglucosamine-1-phosphate (GlcNAc-1-P), which is converted into UDP-GlcNAc by the transfer of uridine 5-monophosphate (from uridine 5-triphosphate), a reaction catalyzed by the N-terminal domain. This is Bifunctional protein GlmU from Shouchella clausii (strain KSM-K16) (Alkalihalobacillus clausii).